We begin with the raw amino-acid sequence, 54 residues long: uncharacterized protein (54 aa).

This is an uncharacterized protein from Saccharolobus solfataricus (Sulfolobus solfataricus).